The primary structure comprises 108 residues: uncharacterized protein (108 aa).

The next 3 helical transmembrane spans lie at 24-44, 55-75, and 88-108; these read LWIT…GGLL, AHMA…YLAM, and RFEI…SIGI.

It to cation A.eutrophus efflux system protein CzcD.

The protein localises to the cell membrane. This is an uncharacterized protein from Geobacillus stearothermophilus (Bacillus stearothermophilus).